The sequence spans 243 residues: Triosephosphate isomerase (243 aa).

Residue 9-11 (NWK) participates in substrate binding. Histidine 96 acts as the Electrophile in catalysis. Glutamate 165 (proton acceptor) is an active-site residue. Substrate-binding positions include glycine 171, serine 204, and 225 to 226 (GG).

The protein belongs to the triosephosphate isomerase family. In terms of assembly, homodimer.

The protein localises to the cytoplasm. It carries out the reaction D-glyceraldehyde 3-phosphate = dihydroxyacetone phosphate. Its pathway is carbohydrate biosynthesis; gluconeogenesis. The protein operates within carbohydrate degradation; glycolysis; D-glyceraldehyde 3-phosphate from glycerone phosphate: step 1/1. Its function is as follows. Involved in the gluconeogenesis. Catalyzes stereospecifically the conversion of dihydroxyacetone phosphate (DHAP) to D-glyceraldehyde-3-phosphate (G3P). The polypeptide is Triosephosphate isomerase (Synechococcus sp. (strain CC9311)).